The chain runs to 545 residues: Chaperonin GroEL (545 aa).

ATP contacts are provided by residues 30–33 (TLGP), Lys-51, 87–91 (DGTTT), Gly-415, 479–481 (NAA), and Asp-495.

Belongs to the chaperonin (HSP60) family. Forms a cylinder of 14 subunits composed of two heptameric rings stacked back-to-back. Interacts with the co-chaperonin GroES.

It is found in the cytoplasm. The enzyme catalyses ATP + H2O + a folded polypeptide = ADP + phosphate + an unfolded polypeptide.. In terms of biological role, together with its co-chaperonin GroES, plays an essential role in assisting protein folding. The GroEL-GroES system forms a nano-cage that allows encapsulation of the non-native substrate proteins and provides a physical environment optimized to promote and accelerate protein folding. In Cellvibrio japonicus (strain Ueda107) (Pseudomonas fluorescens subsp. cellulosa), this protein is Chaperonin GroEL.